The following is a 769-amino-acid chain: Calcium up-regulated protein F (769 aa).

Positions 1 to 21 (MINIKDISKSSNQSEEKSLKG) are disordered. Ricin B-type lectin domains are found at residues 25–145 (KTKY…WTTF) and 116–249 (QGNG…WGIN).

Belongs to the cup family.

It is found in the cytoplasm. It localises to the membrane. May play an important role in stabilizing and/or regulating the cell membrane during Ca(2+) stress or certain stages of development. This Dictyostelium discoideum (Social amoeba) protein is Calcium up-regulated protein F (cupF).